The following is an 86-amino-acid chain: Small ribosomal subunit protein uS15c (86 aa).

This sequence belongs to the universal ribosomal protein uS15 family. In terms of assembly, part of the 30S ribosomal subunit.

The protein localises to the plastid. It localises to the chloroplast. This is Small ribosomal subunit protein uS15c (rps15) from Cryptomeria japonica (Japanese cedar).